The primary structure comprises 67 residues: Gene 51 protein (67 aa).

The chain is Gene 51 protein (51) from Mycobacterium (Mycobacteriophage L5).